The chain runs to 544 residues: Chaperonin GroEL (544 aa).

Residues 30 to 33 (TLGP), lysine 51, 87 to 91 (DGTTT), glycine 415, 481 to 483 (DAL), and aspartate 497 contribute to the ATP site.

This sequence belongs to the chaperonin (HSP60) family. Forms a cylinder of 14 subunits composed of two heptameric rings stacked back-to-back. Interacts with the co-chaperonin GroES.

The protein localises to the cytoplasm. The catalysed reaction is ATP + H2O + a folded polypeptide = ADP + phosphate + an unfolded polypeptide.. Together with its co-chaperonin GroES, plays an essential role in assisting protein folding. The GroEL-GroES system forms a nano-cage that allows encapsulation of the non-native substrate proteins and provides a physical environment optimized to promote and accelerate protein folding. The polypeptide is Chaperonin GroEL (Chlamydia muridarum (strain MoPn / Nigg)).